We begin with the raw amino-acid sequence, 580 residues long: Type 3 secretion system translocon protein SctE (580 aa).

The next 2 membrane-spanning stretches (helical) occupy residues 313-333 (ILGA…GGAS) and 399-419 (IGSI…VVLV).

This sequence belongs to the SctE/SipB/YopB family. In terms of assembly, the core secretion machinery of the T3SS is composed of approximately 20 different proteins, including cytoplasmic components, a base, an export apparatus and a needle. This subunit is involved in the formation of a pore, called the translocon, in host membrane.

Its subcellular location is the secreted. The protein localises to the host membrane. Its function is as follows. Component of the type III secretion system (T3SS), also called injectisome, which is used to inject bacterial effector proteins into eukaryotic host cells. IpaB/SctE and IpaC/SctB are inserted into the host membrane where they form a pore and allow the translocation of effector proteins into the cytosol of target cells. This chain is Type 3 secretion system translocon protein SctE, found in Shigella dysenteriae.